A 92-amino-acid chain; its full sequence is Large ribosomal subunit protein eL43 (92 aa).

The C4-type zinc-finger motif lies at 39–60 (CQFCGKDAMKRQAVGIWGCKSC).

Belongs to the eukaryotic ribosomal protein eL43 family.

This is Large ribosomal subunit protein eL43 (RPL37A) from Cryptochiton stelleri (Giant gumboot chiton).